Reading from the N-terminus, the 330-residue chain is DNA repair and recombination protein RadA (330 aa).

124–131 (GEFGSGKT) serves as a coordination point for ATP.

This sequence belongs to the eukaryotic RecA-like protein family.

In terms of biological role, involved in DNA repair and in homologous recombination. Binds and assemble on single-stranded DNA to form a nucleoprotein filament. Hydrolyzes ATP in a ssDNA-dependent manner and promotes DNA strand exchange between homologous DNA molecules. This chain is DNA repair and recombination protein RadA, found in Pyrobaculum neutrophilum (strain DSM 2338 / JCM 9278 / NBRC 100436 / V24Sta) (Thermoproteus neutrophilus).